The primary structure comprises 271 residues: Neurexophilin-1 (271 aa).

An N-terminal signal peptide occupies residues 1–21; it reads MQAACWYVLLLLQPTVYLVTC. The tract at residues 22–97 is II; it reads ANLTNGGKSE…WDWLRNSTDL (76 aa). Asparagine 23, asparagine 68, asparagine 93, asparagine 146, asparagine 156, and asparagine 162 each carry an N-linked (GlcNAc...) asparagine glycan. Residues 98-176 form an III region; it reads QEPRPRAKRR…LVPPTKIVEF (79 aa). An IV (linker domain) region spans residues 177–185; the sequence is DLAQQTVID. Residues 186–271 are v (Cys-rich); sequence AKDSKSFNCR…HSDTPYFPSG (86 aa).

Belongs to the neurexophilin family. May be proteolytically processed at the boundary between the N-terminal non-conserved and the central conserved domain in neuron-like cells.

The protein resides in the secreted. In terms of biological role, may be signaling molecules that resemble neuropeptides. Ligand for alpha-neurexins. The sequence is that of Neurexophilin-1 (NXPH1) from Bos taurus (Bovine).